The following is a 483-amino-acid chain: Altronate oxidoreductase (483 aa).

18 to 29 (IIQFGEGNFLRA) is an NAD(+) binding site.

Belongs to the mannitol dehydrogenase family. UxaB subfamily.

It carries out the reaction D-altronate + NAD(+) = keto-D-tagaturonate + NADH + H(+). The protein operates within carbohydrate metabolism; pentose and glucuronate interconversion. This is Altronate oxidoreductase from Klebsiella pneumoniae (strain 342).